A 204-amino-acid polypeptide reads, in one-letter code: ATP-dependent Clp protease proteolytic subunit (204 aa).

The active-site Nucleophile is the Ser101. Residue His126 is part of the active site.

Belongs to the peptidase S14 family. In terms of assembly, fourteen ClpP subunits assemble into 2 heptameric rings which stack back to back to give a disk-like structure with a central cavity, resembling the structure of eukaryotic proteasomes.

The protein localises to the cytoplasm. It catalyses the reaction Hydrolysis of proteins to small peptides in the presence of ATP and magnesium. alpha-casein is the usual test substrate. In the absence of ATP, only oligopeptides shorter than five residues are hydrolyzed (such as succinyl-Leu-Tyr-|-NHMec, and Leu-Tyr-Leu-|-Tyr-Trp, in which cleavage of the -Tyr-|-Leu- and -Tyr-|-Trp bonds also occurs).. In terms of biological role, cleaves peptides in various proteins in a process that requires ATP hydrolysis. Has a chymotrypsin-like activity. Plays a major role in the degradation of misfolded proteins. The protein is ATP-dependent Clp protease proteolytic subunit of Deinococcus radiodurans (strain ATCC 13939 / DSM 20539 / JCM 16871 / CCUG 27074 / LMG 4051 / NBRC 15346 / NCIMB 9279 / VKM B-1422 / R1).